Reading from the N-terminus, the 258-residue chain is Type III pantothenate kinase (258 aa).

6–13 (DVGNTNIV) is an ATP binding site. Substrate contacts are provided by residues Tyr100 and 107–110 (GADR). Catalysis depends on Asp109, which acts as the Proton acceptor. Residue Asp129 participates in K(+) binding. Thr132 is a binding site for ATP. Residue Thr184 coordinates substrate.

Belongs to the type III pantothenate kinase family. In terms of assembly, homodimer. NH4(+) serves as cofactor. It depends on K(+) as a cofactor.

Its subcellular location is the cytoplasm. The enzyme catalyses (R)-pantothenate + ATP = (R)-4'-phosphopantothenate + ADP + H(+). It functions in the pathway cofactor biosynthesis; coenzyme A biosynthesis; CoA from (R)-pantothenate: step 1/5. Its function is as follows. Catalyzes the phosphorylation of pantothenate (Pan), the first step in CoA biosynthesis. The protein is Type III pantothenate kinase of Clostridium botulinum (strain Loch Maree / Type A3).